Here is a 328-residue protein sequence, read N- to C-terminus: Malate dehydrogenase (328 aa).

12 to 18 contributes to the NAD(+) binding site; that stretch reads GAAGQIG. Residues Arg-95 and Arg-101 each contribute to the substrate site. NAD(+) is bound by residues Asn-108, Gln-115, and 132-134; that span reads VGN. Substrate is bound by residues Asn-134 and Arg-165. Catalysis depends on His-190, which acts as the Proton acceptor.

The protein belongs to the LDH/MDH superfamily. MDH type 2 family.

It catalyses the reaction (S)-malate + NAD(+) = oxaloacetate + NADH + H(+). In terms of biological role, catalyzes the reversible oxidation of malate to oxaloacetate. The sequence is that of Malate dehydrogenase from Leptothrix cholodnii (strain ATCC 51168 / LMG 8142 / SP-6) (Leptothrix discophora (strain SP-6)).